Consider the following 295-residue polypeptide: Sulfotransferase 1A1 (295 aa).

48-53 (KSGTTW) contributes to the 3'-phosphoadenylyl sulfate binding site. 106–108 (KTH) is a substrate binding site. H108 acts as the Proton acceptor in catalysis. Residues R130, S138, Y193, 227–232 (TSFKEM), and 255–259 (FMRKG) each bind 3'-phosphoadenylyl sulfate. The residue at position 138 (S138) is a Phosphoserine.

The protein belongs to the sulfotransferase 1 family. As to quaternary structure, homodimer.

The protein localises to the cytoplasm. It carries out the reaction a phenol + 3'-phosphoadenylyl sulfate = an aryl sulfate + adenosine 3',5'-bisphosphate + H(+). The enzyme catalyses 17beta-estradiol + 3'-phosphoadenylyl sulfate = 17beta-estradiol 3-sulfate + adenosine 3',5'-bisphosphate + H(+). The catalysed reaction is 4-ethylphenol + 3'-phosphoadenylyl sulfate = 4-ethylphenyl sulfate + adenosine 3',5'-bisphosphate + H(+). It catalyses the reaction 4-nitrophenol + 3'-phosphoadenylyl sulfate = 4-nitrophenyl sulfate + adenosine 3',5'-bisphosphate. It carries out the reaction dopamine + 3'-phosphoadenylyl sulfate = dopamine 3-O-sulfate + adenosine 3',5'-bisphosphate + H(+). The enzyme catalyses dopamine + 3'-phosphoadenylyl sulfate = dopamine 4-O-sulfate + adenosine 3',5'-bisphosphate + H(+). The catalysed reaction is 3,3',5-triiodo-L-thyronine + 3'-phosphoadenylyl sulfate = 3,3',5-triiodo-L-thyronine sulfate + adenosine 3',5'-bisphosphate + H(+). It catalyses the reaction 3,3',5'-triiodo-L-thyronine + 3'-phosphoadenylyl sulfate = 3,3',5'-triiodo-L-thyronine sulfate + adenosine 3',5'-bisphosphate + H(+). It carries out the reaction 3,3'-diiodo-L-thyronine + 3'-phosphoadenylyl sulfate = 3,3'-diiodo-L-thyronine sulfate + adenosine 3',5'-bisphosphate + H(+). The enzyme catalyses L-thyroxine + 3'-phosphoadenylyl sulfate = L-thyroxine sulfate + adenosine 3',5'-bisphosphate + H(+). In terms of biological role, sulfotransferase that utilizes 3'-phospho-5'-adenylyl sulfate (PAPS) as sulfonate donor to catalyze the sulfate conjugation of a wide variety of acceptor molecules bearing a hydroxyl or an amine group. Sulfonation increases the water solubility of most compounds, and therefore their renal excretion, but it can also result in bioactivation to form active metabolites. Displays broad substrate specificity for small phenolic compounds. Plays an important role in the sulfonation of endogenous molecules such as steroid hormones. Mediates also the metabolic activation of carcinogenic N-hydroxyarylamines leading to highly reactive intermediates capable of forming DNA adducts, potentially resulting in mutagenesis. May play a role in gut microbiota-host metabolic interaction. O-sulfonates 4-ethylphenol (4-EP), a dietary tyrosine-derived metabolite produced by gut bacteria. The product 4-EPS crosses the blood-brain barrier and may negatively regulate oligodendrocyte maturation and myelination, affecting the functional connectivity of different brain regions associated with the limbic system. Catalyzes the sulfate conjugation of dopamine. Catalyzes the sulfation of T4 (L-thyroxine/3,5,3',5'-tetraiodothyronine), T3 (3,5,3'-triiodothyronine), rT3 (3,3',5'-triiodothyronine) and 3,3'-T2 (3,3'-diiodothyronine), with a substrate preference of 3,3'-T2 &gt; rT3 &gt; T3 &gt; T4. In Macaca fascicularis (Crab-eating macaque), this protein is Sulfotransferase 1A1 (SULT1A1).